The sequence spans 408 residues: 4-hydroxy-3-methylbut-2-en-1-yl diphosphate synthase (ferredoxin) (408 aa).

Positions 1–21 (MQTLPTPTTSSNTANQSTFDT) are enriched in polar residues. Residues 1–26 (MQTLPTPTTSSNTANQSTFDTTIKRR) are disordered. Positions 317, 320, 351, and 358 each coordinate [4Fe-4S] cluster.

It belongs to the IspG family. Requires [4Fe-4S] cluster as cofactor.

The catalysed reaction is (2E)-4-hydroxy-3-methylbut-2-enyl diphosphate + 2 oxidized [2Fe-2S]-[ferredoxin] + H2O = 2-C-methyl-D-erythritol 2,4-cyclic diphosphate + 2 reduced [2Fe-2S]-[ferredoxin] + H(+). It functions in the pathway isoprenoid biosynthesis; isopentenyl diphosphate biosynthesis via DXP pathway; isopentenyl diphosphate from 1-deoxy-D-xylulose 5-phosphate: step 5/6. Its function is as follows. Converts 2C-methyl-D-erythritol 2,4-cyclodiphosphate (ME-2,4cPP) into 1-hydroxy-2-methyl-2-(E)-butenyl 4-diphosphate. This is 4-hydroxy-3-methylbut-2-en-1-yl diphosphate synthase (ferredoxin) from Trichormus variabilis (strain ATCC 29413 / PCC 7937) (Anabaena variabilis).